A 446-amino-acid chain; its full sequence is Phosphoglucosamine mutase (446 aa).

S102 acts as the Phosphoserine intermediate in catalysis. Mg(2+) is bound by residues S102, D241, D243, and D245. A Phosphoserine modification is found at S102.

The protein belongs to the phosphohexose mutase family. Mg(2+) serves as cofactor. In terms of processing, activated by phosphorylation.

It catalyses the reaction alpha-D-glucosamine 1-phosphate = D-glucosamine 6-phosphate. Catalyzes the conversion of glucosamine-6-phosphate to glucosamine-1-phosphate. The protein is Phosphoglucosamine mutase of Yersinia enterocolitica serotype O:8 / biotype 1B (strain NCTC 13174 / 8081).